We begin with the raw amino-acid sequence, 407 residues long: Peptidase T (407 aa).

His-82 provides a ligand contact to Zn(2+). Asp-84 is an active-site residue. A Zn(2+)-binding site is contributed by Asp-143. The Proton acceptor role is filled by Glu-177. Glu-178, Asp-200, and His-382 together coordinate Zn(2+).

This sequence belongs to the peptidase M20B family. It depends on Zn(2+) as a cofactor.

It is found in the cytoplasm. It carries out the reaction Release of the N-terminal residue from a tripeptide.. Its function is as follows. Cleaves the N-terminal amino acid of tripeptides. The polypeptide is Peptidase T (Streptococcus pyogenes serotype M12 (strain MGAS2096)).